The sequence spans 264 residues: Thymidylate synthase (264 aa).

Arginine 21 provides a ligand contact to dUMP. Residue histidine 51 participates in (6R)-5,10-methylene-5,6,7,8-tetrahydrofolate binding. 126–127 provides a ligand contact to dUMP; sequence RR. Cysteine 146 (nucleophile) is an active-site residue. DUMP contacts are provided by residues 166–169, asparagine 177, and 207–209; these read RSCD and HLY. Aspartate 169 contributes to the (6R)-5,10-methylene-5,6,7,8-tetrahydrofolate binding site. Residue alanine 263 participates in (6R)-5,10-methylene-5,6,7,8-tetrahydrofolate binding.

The protein belongs to the thymidylate synthase family. Bacterial-type ThyA subfamily. As to quaternary structure, homodimer.

The protein localises to the cytoplasm. The catalysed reaction is dUMP + (6R)-5,10-methylene-5,6,7,8-tetrahydrofolate = 7,8-dihydrofolate + dTMP. It participates in pyrimidine metabolism; dTTP biosynthesis. In terms of biological role, catalyzes the reductive methylation of 2'-deoxyuridine-5'-monophosphate (dUMP) to 2'-deoxythymidine-5'-monophosphate (dTMP) while utilizing 5,10-methylenetetrahydrofolate (mTHF) as the methyl donor and reductant in the reaction, yielding dihydrofolate (DHF) as a by-product. This enzymatic reaction provides an intracellular de novo source of dTMP, an essential precursor for DNA biosynthesis. The protein is Thymidylate synthase of Yersinia pseudotuberculosis serotype O:1b (strain IP 31758).